A 510-amino-acid polypeptide reads, in one-letter code: Secreted RxLR effector protein 108 (510 aa).

An N-terminal signal peptide occupies residues 1 to 20; sequence MRGAYYVLTALFVVTSSDIA. A glycan (N-linked (GlcNAc...) asparagine) is linked at N47. A RxLR-dEER motif is present at residues 48–65; sequence RSLRGSRDGRNDLANEER. 2 disordered regions span residues 111–139 and 386–442; these read RAAK…AKKT and KRSR…DDPK. Positions 122–137 are enriched in basic residues; sequence PAKAAKKTPRAAKAAK. The segment covering 393-405 has biased composition (polar residues); sequence DGNTDTASLPSKQ. Basic and acidic residues predominate over residues 429–442; that stretch reads VPTKEIKSSFDDPK.

Belongs to the RxLR effector family.

The protein resides in the secreted. It is found in the host nucleus. Its function is as follows. Secreted effector that completely suppresses the host cell death induced by cell death-inducing proteins. The chain is Secreted RxLR effector protein 108 from Plasmopara viticola (Downy mildew of grapevine).